The primary structure comprises 83 residues: Small ribosomal subunit protein uS17 (83 aa).

Belongs to the universal ribosomal protein uS17 family. In terms of assembly, part of the 30S ribosomal subunit.

Functionally, one of the primary rRNA binding proteins, it binds specifically to the 5'-end of 16S ribosomal RNA. The sequence is that of Small ribosomal subunit protein uS17 from Francisella tularensis subsp. tularensis (strain FSC 198).